Reading from the N-terminus, the 761-residue chain is Semaphorin-3D (761 aa).

Positions 1-24 (MRASQVPNACSLLSLAMLFFPVTG) are cleaved as a signal peptide. The Sema domain occupies 32-519 (RLKLSYKDLL…SRDGLVQLSL (488 aa)). A disulfide bridge connects residues Cys-105 and Cys-116. A glycan (N-linked (GlcNAc...) asparagine) is linked at Asn-127. Cystine bridges form between Cys-134/Cys-143, Cys-274/Cys-386, Cys-298/Cys-346, and Cys-522/Cys-540. One can recognise an Ig-like C2-type domain in the interval 552–670 (PTSKRRARRQ…IHTIVKLNLN (119 aa)). N-linked (GlcNAc...) asparagine glycosylation is present at Asn-595. A disulfide bond links Cys-653 and Cys-719. A compositionally biased stretch (basic residues) spans 728–754 (RRQRNKGGAKWKHVQEMKKKRNRRHHE). Residues 728-761 (RRQRNKGGAKWKHVQEMKKKRNRRHHEPARPPST) form a disordered region.

Belongs to the semaphorin family. Developing spinal cord and developing visual system. Collapsin-1, -2, -3, and -5 bind to overlapping but distinct axon tracts.

It is found in the secreted. Induces the collapse and paralysis of neuronal growth cones. Could potentially act as repulsive cues toward specific neuronal populations. Binds to neuropilin. The polypeptide is Semaphorin-3D (SEMA3D) (Gallus gallus (Chicken)).